We begin with the raw amino-acid sequence, 51 residues long: UPF0391 membrane protein Psyc_0130 (51 aa).

The next 2 helical transmembrane spans lie at 6-26 (IIFAVIALLASFLGFGGVAGL) and 28-47 (ANFAYILLALAVILFIVAFV).

The protein belongs to the UPF0391 family.

Its subcellular location is the cell membrane. In Psychrobacter arcticus (strain DSM 17307 / VKM B-2377 / 273-4), this protein is UPF0391 membrane protein Psyc_0130.